Reading from the N-terminus, the 156-residue chain is MKKSCIYPGTFDPITNGHLDVIIRATKIFDKVIVAVAKSDSKQPMFAHEKRIEMAKEAVCELKNVSVLGFDNLLVDFAKSHGINTVIRGLRAVSDFEYELQIGYANAALWDEFETVYLMPSLNNAFISSSIVRSVLRHDGDVSNLVPAKILKNLKA.

Threonine 10 contributes to the substrate binding site. Residues 10-11 and histidine 18 contribute to the ATP site; that span reads TF. Substrate is bound by residues lysine 42, leucine 74, and arginine 88. ATP contacts are provided by residues 89 to 91, glutamate 99, and 124 to 130; these read GLR and NAFISSS.

It belongs to the bacterial CoaD family. Homohexamer. Mg(2+) serves as cofactor.

It localises to the cytoplasm. It carries out the reaction (R)-4'-phosphopantetheine + ATP + H(+) = 3'-dephospho-CoA + diphosphate. It participates in cofactor biosynthesis; coenzyme A biosynthesis; CoA from (R)-pantothenate: step 4/5. Its function is as follows. Reversibly transfers an adenylyl group from ATP to 4'-phosphopantetheine, yielding dephospho-CoA (dPCoA) and pyrophosphate. This is Phosphopantetheine adenylyltransferase from Campylobacter concisus (strain 13826).